A 209-amino-acid chain; its full sequence is Prolactin (209 aa).

The signal sequence occupies residues 1-24; that stretch reads MAQRFKGRSLFLTALLCLASQGYA. Intrachain disulfides connect Cys70-Cys184 and Cys201-Cys209.

It belongs to the somatotropin/prolactin family.

It is found in the secreted. The sequence is that of Prolactin (prl) from Anguilla anguilla (European freshwater eel).